Consider the following 377-residue polypeptide: Succinyl-diaminopimelate desuccinylase (377 aa).

Residue His67 participates in Zn(2+) binding. Asp69 is a catalytic residue. Asp100 lines the Zn(2+) pocket. Residue Glu134 is the Proton acceptor of the active site. 3 residues coordinate Zn(2+): Glu135, Glu163, and His349.

This sequence belongs to the peptidase M20A family. DapE subfamily. In terms of assembly, homodimer. Zn(2+) is required as a cofactor. Requires Co(2+) as cofactor.

It carries out the reaction N-succinyl-(2S,6S)-2,6-diaminopimelate + H2O = (2S,6S)-2,6-diaminopimelate + succinate. Its pathway is amino-acid biosynthesis; L-lysine biosynthesis via DAP pathway; LL-2,6-diaminopimelate from (S)-tetrahydrodipicolinate (succinylase route): step 3/3. Functionally, catalyzes the hydrolysis of N-succinyl-L,L-diaminopimelic acid (SDAP), forming succinate and LL-2,6-diaminopimelate (DAP), an intermediate involved in the bacterial biosynthesis of lysine and meso-diaminopimelic acid, an essential component of bacterial cell walls. This Actinobacillus pleuropneumoniae serotype 5b (strain L20) protein is Succinyl-diaminopimelate desuccinylase.